Reading from the N-terminus, the 981-residue chain is Ephrin type-A receptor 3 (981 aa).

The N-terminal stretch at M1–Q20 is a signal peptide. Residues A21 to T545 are Extracellular-facing. Residues E29–L210 enclose the Eph LBD domain. 2 consecutive Fibronectin type-III domains span residues P328–T441 and V442–E533. N-linked (GlcNAc...) asparagine glycosylation is found at N340, N410, N435, and N485. Residues I546–I566 form a helical membrane-spanning segment. At V567–V981 the chain is on the cytoplasmic side. Residues Y601 and Y607 each carry the phosphotyrosine; by autocatalysis modification. Residues I626–I887 enclose the Protein kinase domain. ATP-binding positions include G633–G638, K658, and E705–S711. Y706 bears the Phosphotyrosine; by autocatalysis mark. D751 (proton acceptor) is an active-site residue. R755 to N756 contacts ATP. Y784 and Y927 each carry phosphotyrosine; by autocatalysis. Positions A910–H974 constitute an SAM domain. Residues V979–V981 carry the PDZ-binding motif.

It belongs to the protein kinase superfamily. Tyr protein kinase family. Ephrin receptor subfamily. As to quaternary structure, heterotetramer upon binding of the ligand. The heterotetramer is composed of an ephrin dimer and a receptor dimer. Oligomerization is probably required to induce biological responses. Autophosphorylates upon activation by efna5. Widely expressed in the developing zebrafish nervous system.

Its subcellular location is the cell membrane. It carries out the reaction L-tyrosyl-[protein] + ATP = O-phospho-L-tyrosyl-[protein] + ADP + H(+). Receptor tyrosine kinase which binds promiscuously membrane-bound ephrin family ligands residing on adjacent cells, leading to contact-dependent bidirectional signaling into neighboring cells. The signaling pathway downstream of the receptor is referred to as forward signaling while the signaling pathway downstream of the ephrin ligand is referred to as reverse signaling. Highly promiscuous for ephrin-A ligands it binds preferentially efna5. Upon activation by efna5 regulates cell-cell adhesion, cytoskeletal organization and cell migration. Plays a role in cardiac cells migration and differentiation probably through activation by efna1. Involved in the retinotectal mapping of neurons. May also control the segregation but not the guidance of motor and sensory axons during neuromuscular circuit development. In Danio rerio (Zebrafish), this protein is Ephrin type-A receptor 3 (epha3).